The primary structure comprises 226 residues: Cobalt transport protein CbiM 1 (226 aa).

The next 6 helical transmembrane spans lie at 6-26 (GFLP…VVAY), 43-63 (MLLG…MPSV), 75-95 (LGAI…VLLF), 107-127 (TLGA…AAVF), 135-155 (FPFG…TYVT), and 181-201 (VFAL…VVVM).

This sequence belongs to the CbiM family. In terms of assembly, forms an energy-coupling factor (ECF) transporter complex composed of an ATP-binding protein (A component, CbiO), a transmembrane protein (T component, CbiQ) and 2 possible substrate-capture proteins (S components, CbiM and CbiN) of unknown stoichimetry.

The protein resides in the cell inner membrane. Its pathway is cofactor biosynthesis; adenosylcobalamin biosynthesis. Its function is as follows. Part of the energy-coupling factor (ECF) transporter complex CbiMNOQ involved in cobalt import. The polypeptide is Cobalt transport protein CbiM 1 (cbim1) (Pelobacter propionicus (strain DSM 2379 / NBRC 103807 / OttBd1)).